We begin with the raw amino-acid sequence, 104 residues long: Type VII secretion system extracellular protein B (104 aa).

This sequence belongs to the WXG100 family. As to quaternary structure, homodimer. When mixed with EsxA does not form heterodimers. Forms heterodimers with EsxD.

Its subcellular location is the secreted. Virulence factor that is important for the establishment of infection in the host. EsxB is required for EsxA synthesis as well as secretion. Mediates together with EsxA the release of S.aureus from the host cell. Also inhibits host cytokine production and thus modulates dendritic cell-mediated immunity. The chain is Type VII secretion system extracellular protein B from Staphylococcus aureus (strain USA300).